The following is a 137-amino-acid chain: Proline-rich protein 13 (137 aa).

Disordered stretches follow at residues 26 to 54 (PPPL…PCRP) and 94 to 137 (VGPG…SDSD). Over residues 103-124 (KTRKKMKKAHKKSHKHHKHGKH) the composition is skewed to basic residues. Residues 125–137 (SSSSSSSSSSDSD) show a composition bias toward low complexity.

It localises to the nucleus. Negatively regulates TSP1 expression at the level of transcription. This down-regulation was shown to reduce taxane-induced apoptosis. The polypeptide is Proline-rich protein 13 (Prr13) (Mus musculus (Mouse)).